The following is a 90-amino-acid chain: uncharacterized protein (90 aa).

This is an uncharacterized protein from Bos taurus (Bovine).